Consider the following 198-residue polypeptide: Recombination protein RecR (198 aa).

The segment at 57-72 (CSVCGHITDRDPCYIC) adopts a C4-type zinc-finger fold. One can recognise a Toprim domain in the interval 80 to 175 (SVVCVVQEPK…KVTRIAHGLP (96 aa)).

The protein belongs to the RecR family.

Its function is as follows. May play a role in DNA repair. It seems to be involved in an RecBC-independent recombinational process of DNA repair. It may act with RecF and RecO. The chain is Recombination protein RecR from Bacillus thuringiensis (strain Al Hakam).